The primary structure comprises 414 residues: Arrestin domain-containing protein 3 (414 aa).

2 consecutive short sequence motifs (PPxY motif) follow at residues 346 to 349 (PPSY) and 391 to 394 (PPLY). The segment at 393–414 (LYSEIDPNPDQPADDRPSCPSR) is disordered. Residues 405–414 (ADDRPSCPSR) are compositionally biased toward basic and acidic residues.

It belongs to the arrestin family. As to quaternary structure, interacts (via PPxY motifs) with NEDD4 (via WW domains). Interacts with ADRB2. Interacts with ADRB3. Interacts with HGS (via PPxY motifs). Does not bind TXN (thioredoxin). Interacts with ITCH.

Its subcellular location is the cytoplasm. It is found in the cell membrane. It localises to the lysosome. The protein resides in the endosome. The protein localises to the early endosome. In terms of biological role, adapter protein that plays a role in regulating cell-surface expression of adrenergic receptors and probably also other G protein-coupled receptors. Plays a role in NEDD4-mediated ubiquitination and endocytosis af activated ADRB2 and subsequent ADRB2 degradation. May recruit NEDD4 to ADRB2. Alternatively, may function as adapter protein that does not play a major role in recruiting NEDD4 to ADRB2, but rather plays a role in a targeting ADRB2 to endosomes. This Bos taurus (Bovine) protein is Arrestin domain-containing protein 3 (ARRDC3).